Reading from the N-terminus, the 179-residue chain is Insulin-like growth factor 2 (179 aa).

An N-terminal signal peptide occupies residues 1–24 (MGITAGKSMLALLAFLAFASCCYA). The interval 25–52 (AYRPSETLCGGELVDTLQFVCGDRGFYF) is b. Cystine bridges form between Cys33/Cys71, Cys45/Cys84, and Cys70/Cys75. Positions 53–64 (SRPSSRINRRSR) are c. The interval 65-85 (GIVEECCFRSCDLALLETYCA) is a. Residues 86 to 91 (APAKSE) are d. Residues 92 to 179 (RDVSASTTVL…GGASSEASSD (88 aa)) constitute a propeptide, e peptide. O-linked (GalNAc...) threonine glycosylation occurs at Thr106. The O-linked (GalNAc...) serine glycan is linked to Ser154. The interval 160 to 179 (ALPTQDPATHGGASSEASSD) is disordered. Residue Thr163 is glycosylated (O-linked (GalNAc...) threonine).

Belongs to the insulin family. Interacts with MYORG; this interaction is required for IGF2 secretion. Interacts with integrins ITGAV:ITGB3 and ITGA6:ITGB4; integrin-binding is required for IGF2 signaling. Interacts with IGFBP2. Proteolytically processed by PCSK4, proIGF2 is cleaved at Arg-128 and Arg-92 to generate big-IGF2 and mature IGF2.

The protein localises to the secreted. In terms of biological role, the insulin-like growth factors possess growth-promoting activity. Major fetal growth hormone in mammals. Plays a key role in regulating fetoplacental development. IGF2 is influenced by placental lactogen. Also involved in tissue differentiation. In adults, involved in glucose metabolism in adipose tissue, skeletal muscle and liver. Acts as a ligand for integrin which is required for IGF2 signaling. Positively regulates myogenic transcription factor MYOD1 function by facilitating the recruitment of transcriptional coactivators, thereby controlling muscle terminal differentiation. Inhibits myoblast differentiation and modulates metabolism via increasing the mitochondrial respiration rate. Preptin undergoes glucose-mediated co-secretion with insulin, and acts as a physiological amplifier of glucose-mediated insulin secretion. Exhibits osteogenic properties by increasing osteoblast mitogenic activity through phosphoactivation of MAPK1 and MAPK3. The polypeptide is Insulin-like growth factor 2 (Ovis aries (Sheep)).